The sequence spans 363 residues: MDQIVNVDEFQELAKQALPKMYYDFYNGGAEDQHTLNENVQAFRRIMFRPRVLVDVSNIDMSTSMLGYPISAPIMIAPTAMHKLAHPKGEIATAKAAAACNTIMIVSFMSTCTIEEVASSCNAVRFLQIYVYKRRDVTAQIVKRAEKAGFKAIVLTVDVPRLGRREADIKNKMISPQLKNFEGLVSTEVRPNEGSGVEAFASSAFDASLSWKDIEWLRSITKLPILVKGLLTREDALKAVEAGVDGIVVSNHGARQLDYSPATITVLEEVVHAVKGRIPVLLDGGVRRGTDVFKALALGAQAVLIGRPIVYGLAAKGEDGVKKVIDMLKNEFEITMALSGCPTIDDVTRNHVRTENERIKSML.

In terms of domain architecture, FMN hydroxy acid dehydrogenase spans 1–357; that stretch reads MDQIVNVDEF…TRNHVRTENE (357 aa). FMN-binding positions include 78 to 80, S107, 128 to 130, and T156; these read PTA and QIY. Y130 provides a ligand contact to a 2-oxocarboxylate. R165 is a binding site for a 2-oxocarboxylate. FMN-binding residues include K228 and S250. Residue H252 is the Proton acceptor of the active site. Residue R255 coordinates a 2-oxocarboxylate. Residues 283–287 and 306–307 contribute to the FMN site; these read DGGVR and GR. A Microbody targeting signal motif is present at residues 361–363; sequence SML.

This sequence belongs to the FMN-dependent alpha-hydroxy acid dehydrogenase family. As to quaternary structure, homotetramer. The cofactor is FMN.

It is found in the peroxisome. The enzyme catalyses a (2S)-2-hydroxycarboxylate + O2 = a 2-oxocarboxylate + H2O2. It carries out the reaction 2-hydroxydodecanoate + O2 = 2-oxododecanoate + H2O2. It catalyses the reaction 2-hydroxyhexanoate + O2 = 2-oxohexanoate + H2O2. The catalysed reaction is 2-hydroxyoctanoate + O2 = 2-oxooctanoate + H2O2. The enzyme catalyses (S)-lactate + O2 = pyruvate + H2O2. It participates in lipid metabolism; fatty acid metabolism. Oxidase that catalyzes the oxidation of a broad range of 2-hydroxyacids to the corresponding 2-oxoacids, with a reduction of O2 to H2O2. Displays the highest activity with the long-chain fatty acid 2-hydroxydodecanoate and has intermediate activity with 2-hydroxyhexanoate, 2-hydroxyoctanote, and the short-chain hydroxyacid (S)-lactate (L-lactate). With much lower activity, it can also use glycolate, leucic acid, valic acid, and isoleucic acid as substrates in vitro. Cannot use 2-hydroxyhexadecanoate or D-lactate as substrates. May be involved in a general medium- and long-chain fatty acid catabolic pathway such as alpha-oxidation. This is Peroxisomal (S)-2-hydroxyacid oxidase GLO4 (GLO4) from Arabidopsis thaliana (Mouse-ear cress).